A 185-amino-acid polypeptide reads, in one-letter code: Ribosome-recycling factor (185 aa).

It belongs to the RRF family.

The protein resides in the cytoplasm. Functionally, responsible for the release of ribosomes from messenger RNA at the termination of protein biosynthesis. May increase the efficiency of translation by recycling ribosomes from one round of translation to another. This Corynebacterium glutamicum (strain R) protein is Ribosome-recycling factor.